The sequence spans 398 residues: Elongation factor Tu (398 aa).

A tr-type G domain is found at 10–207 (KPHVNIGTIG…TVDSYIPEPE (198 aa)). The G1 stretch occupies residues 19-26 (GHVDHGKT). Residue 19 to 26 (GHVDHGKT) coordinates GTP. Mg(2+) is bound at residue T26. The interval 63–67 (GITIN) is G2. The segment at 84-87 (DAPG) is G3. Residues 84-88 (DAPGH) and 139-142 (NKVD) contribute to the GTP site. Residues 139–142 (NKVD) form a G4 region. The G5 stretch occupies residues 177 to 179 (SAL).

The protein belongs to the TRAFAC class translation factor GTPase superfamily. Classic translation factor GTPase family. EF-Tu/EF-1A subfamily. In terms of assembly, monomer.

It localises to the cytoplasm. It catalyses the reaction GTP + H2O = GDP + phosphate + H(+). Its function is as follows. GTP hydrolase that promotes the GTP-dependent binding of aminoacyl-tRNA to the A-site of ribosomes during protein biosynthesis. This chain is Elongation factor Tu, found in Streptococcus pyogenes serotype M1.